Consider the following 347-residue polypeptide: tRNA N6-adenosine threonylcarbamoyltransferase (347 aa).

Residues H115 and H119 each contribute to the Fe cation site. Substrate is bound by residues 137-141, D170, G183, and N281; that span reads LASGG. D309 serves as a coordination point for Fe cation.

Belongs to the KAE1 / TsaD family. Fe(2+) is required as a cofactor.

Its subcellular location is the cytoplasm. The enzyme catalyses L-threonylcarbamoyladenylate + adenosine(37) in tRNA = N(6)-L-threonylcarbamoyladenosine(37) in tRNA + AMP + H(+). In terms of biological role, required for the formation of a threonylcarbamoyl group on adenosine at position 37 (t(6)A37) in tRNAs that read codons beginning with adenine. Is involved in the transfer of the threonylcarbamoyl moiety of threonylcarbamoyl-AMP (TC-AMP) to the N6 group of A37, together with TsaE and TsaB. TsaD likely plays a direct catalytic role in this reaction. In Methylorubrum populi (strain ATCC BAA-705 / NCIMB 13946 / BJ001) (Methylobacterium populi), this protein is tRNA N6-adenosine threonylcarbamoyltransferase.